The following is a 143-amino-acid chain: Transcriptional regulator MraZ (143 aa).

2 consecutive SpoVT-AbrB domains span residues 5 to 47 and 76 to 119; these read EYQH…PQDE and AAEL…STEK.

The protein belongs to the MraZ family. As to quaternary structure, forms oligomers.

Its subcellular location is the cytoplasm. The protein resides in the nucleoid. The sequence is that of Transcriptional regulator MraZ from Syntrophomonas wolfei subsp. wolfei (strain DSM 2245B / Goettingen).